Here is a 181-residue protein sequence, read N- to C-terminus: ATP synthase subunit b (181 aa).

Residues 16–36 (LIPPIPELVIGLIAFVIVFGF) traverse the membrane as a helical segment.

It belongs to the ATPase B chain family. As to quaternary structure, F-type ATPases have 2 components, F(1) - the catalytic core - and F(0) - the membrane proton channel. F(1) has five subunits: alpha(3), beta(3), gamma(1), delta(1), epsilon(1). F(0) has three main subunits: a(1), b(2) and c(10-14). The alpha and beta chains form an alternating ring which encloses part of the gamma chain. F(1) is attached to F(0) by a central stalk formed by the gamma and epsilon chains, while a peripheral stalk is formed by the delta and b chains.

The protein localises to the cell membrane. In terms of biological role, f(1)F(0) ATP synthase produces ATP from ADP in the presence of a proton or sodium gradient. F-type ATPases consist of two structural domains, F(1) containing the extramembraneous catalytic core and F(0) containing the membrane proton channel, linked together by a central stalk and a peripheral stalk. During catalysis, ATP synthesis in the catalytic domain of F(1) is coupled via a rotary mechanism of the central stalk subunits to proton translocation. Functionally, component of the F(0) channel, it forms part of the peripheral stalk, linking F(1) to F(0). This Streptomyces lividans protein is ATP synthase subunit b.